An 88-amino-acid polypeptide reads, in one-letter code: LYR motif-containing protein 2 (88 aa).

A mitochondrion-targeting transit peptide spans 1 to 19 (MAASRLPPAALTLKQFMRR).

The protein belongs to the complex I LYR family.

The protein resides in the mitochondrion. Its function is as follows. Involved in efficient integration of the N-module into mitochondrial respiratory chain complex I. This is LYR motif-containing protein 2 (Lyrm2) from Mus musculus (Mouse).